The chain runs to 235 residues: uncharacterized protein (235 aa).

This sequence belongs to the UreF family.

It localises to the cytoplasm. It is found in the nucleus. Its function is as follows. Probably facilitates nickel incorporation. This is an uncharacterized protein from Schizosaccharomyces pombe (strain 972 / ATCC 24843) (Fission yeast).